Here is a 321-residue protein sequence, read N- to C-terminus: Lipoyl synthase (321 aa).

The tract at residues 1–21 (MRHRWEDRPVAPPPDGRPTEY) is disordered. [4Fe-4S] cluster-binding residues include Cys63, Cys68, Cys74, Cys89, Cys93, Cys96, and Ser302. Positions 75–291 (WNNRTATFMI…KKLGLEMGFS (217 aa)) constitute a Radical SAM core domain. Residues 301–321 (SSYHAHEQTEDARRGALGARG) are disordered. Over residues 304 to 314 (HAHEQTEDARR) the composition is skewed to basic and acidic residues.

The protein belongs to the radical SAM superfamily. Lipoyl synthase family. Requires [4Fe-4S] cluster as cofactor.

The protein localises to the cytoplasm. It carries out the reaction [[Fe-S] cluster scaffold protein carrying a second [4Fe-4S](2+) cluster] + N(6)-octanoyl-L-lysyl-[protein] + 2 oxidized [2Fe-2S]-[ferredoxin] + 2 S-adenosyl-L-methionine + 4 H(+) = [[Fe-S] cluster scaffold protein] + N(6)-[(R)-dihydrolipoyl]-L-lysyl-[protein] + 4 Fe(3+) + 2 hydrogen sulfide + 2 5'-deoxyadenosine + 2 L-methionine + 2 reduced [2Fe-2S]-[ferredoxin]. It functions in the pathway protein modification; protein lipoylation via endogenous pathway; protein N(6)-(lipoyl)lysine from octanoyl-[acyl-carrier-protein]: step 2/2. In terms of biological role, catalyzes the radical-mediated insertion of two sulfur atoms into the C-6 and C-8 positions of the octanoyl moiety bound to the lipoyl domains of lipoate-dependent enzymes, thereby converting the octanoylated domains into lipoylated derivatives. The polypeptide is Lipoyl synthase (Rubrobacter xylanophilus (strain DSM 9941 / JCM 11954 / NBRC 16129 / PRD-1)).